Here is a 359-residue protein sequence, read N- to C-terminus: Fructose-bisphosphate aldolase, cytoplasmic isozyme (359 aa).

Residues Arg52 and Lys142 each contribute to the substrate site. Glu184 acts as the Proton acceptor in catalysis. The active-site Schiff-base intermediate with dihydroxyacetone-P is the Lys226.

It belongs to the class I fructose-bisphosphate aldolase family.

Its subcellular location is the cytoplasm. It carries out the reaction beta-D-fructose 1,6-bisphosphate = D-glyceraldehyde 3-phosphate + dihydroxyacetone phosphate. The protein operates within carbohydrate degradation; glycolysis; D-glyceraldehyde 3-phosphate and glycerone phosphate from D-glucose: step 4/4. This chain is Fructose-bisphosphate aldolase, cytoplasmic isozyme (ALDC), found in Cicer arietinum (Chickpea).